Here is a 165-residue protein sequence, read N- to C-terminus: MRAIYITGYMGAGKTTIGKALSKELGIDVIDTDQKIEEKQGRVIRDIFAKEGERSFRQYESEMLCSLPTKDVIITTGGGIVERIENREWMKENGTVVYLYCDPYVIADRLHEDITRPLFQKENVEAFVAKFEERRAFYEEAVIQIDTTNKSIQEVTEEILRRINS.

11–16 provides a ligand contact to ATP; sequence GAGKTT. T15 lines the Mg(2+) pocket. D33, R57, and G78 together coordinate substrate. R116 provides a ligand contact to ATP. R134 is a substrate binding site.

This sequence belongs to the shikimate kinase family. As to quaternary structure, monomer. Requires Mg(2+) as cofactor.

Its subcellular location is the cytoplasm. It carries out the reaction shikimate + ATP = 3-phosphoshikimate + ADP + H(+). It participates in metabolic intermediate biosynthesis; chorismate biosynthesis; chorismate from D-erythrose 4-phosphate and phosphoenolpyruvate: step 5/7. Functionally, catalyzes the specific phosphorylation of the 3-hydroxyl group of shikimic acid using ATP as a cosubstrate. The protein is Shikimate kinase of Bacillus cytotoxicus (strain DSM 22905 / CIP 110041 / 391-98 / NVH 391-98).